Here is a 294-residue protein sequence, read N- to C-terminus: Eukaryotic translation initiation factor 3 subunit F (294 aa).

One can recognise an MPN domain in the interval 20 to 163; sequence VTVTAQALFQ…IDPSKNSGNC (144 aa).

This sequence belongs to the eIF-3 subunit F family. Component of the eukaryotic translation initiation factor 3 (eIF-3) complex.

It is found in the cytoplasm. In terms of biological role, component of the eukaryotic translation initiation factor 3 (eIF-3) complex, which is involved in protein synthesis of a specialized repertoire of mRNAs and, together with other initiation factors, stimulates binding of mRNA and methionyl-tRNAi to the 40S ribosome. The eIF-3 complex specifically targets and initiates translation of a subset of mRNAs involved in cell proliferation. This Yarrowia lipolytica (strain CLIB 122 / E 150) (Yeast) protein is Eukaryotic translation initiation factor 3 subunit F.